The sequence spans 363 residues: Chorismate synthase (363 aa).

NADP(+)-binding residues include R48 and R54. FMN-binding positions include 125-127, 237-238, G277, 292-296, and R318; these read RSS, NA, and KPTSS.

Belongs to the chorismate synthase family. Homotetramer. The cofactor is FMNH2.

It catalyses the reaction 5-O-(1-carboxyvinyl)-3-phosphoshikimate = chorismate + phosphate. The protein operates within metabolic intermediate biosynthesis; chorismate biosynthesis; chorismate from D-erythrose 4-phosphate and phosphoenolpyruvate: step 7/7. In terms of biological role, catalyzes the anti-1,4-elimination of the C-3 phosphate and the C-6 proR hydrogen from 5-enolpyruvylshikimate-3-phosphate (EPSP) to yield chorismate, which is the branch point compound that serves as the starting substrate for the three terminal pathways of aromatic amino acid biosynthesis. This reaction introduces a second double bond into the aromatic ring system. The sequence is that of Chorismate synthase from Stutzerimonas stutzeri (strain A1501) (Pseudomonas stutzeri).